A 549-amino-acid chain; its full sequence is FERM domain-containing protein 1 (549 aa).

The segment at 1 to 40 is disordered; sequence MAVPPRGRGIDPARTNPDTFPPSGARCMEPSPERPACSQQ. The region spanning 54 to 369 is the FERM domain; the sequence is RDVLVLLPSR…DELELDLASR (316 aa). Disordered regions lie at residues 377–400 and 422–464; these read SSQH…YTSG and HGLH…GQSA. The segment covering 430–443 has biased composition (low complexity); sequence SSSPRTSRSHPSTR. Residues 444–462 are compositionally biased toward polar residues; the sequence is GDSQATRQEPCTQVRTRGQ.

The protein is FERM domain-containing protein 1 (FRMD1) of Homo sapiens (Human).